We begin with the raw amino-acid sequence, 162 residues long: NADH-quinone oxidoreductase subunit I 2 (162 aa).

4Fe-4S ferredoxin-type domains are found at residues Leu53 to Glu83 and Thr93 to Ile122. 8 residues coordinate [4Fe-4S] cluster: Cys63, Cys66, Cys69, Cys73, Cys102, Cys105, Cys108, and Cys112.

This sequence belongs to the complex I 23 kDa subunit family. As to quaternary structure, NDH-1 is composed of 14 different subunits. Subunits NuoA, H, J, K, L, M, N constitute the membrane sector of the complex. [4Fe-4S] cluster is required as a cofactor.

The protein localises to the cell inner membrane. It carries out the reaction a quinone + NADH + 5 H(+)(in) = a quinol + NAD(+) + 4 H(+)(out). Its function is as follows. NDH-1 shuttles electrons from NADH, via FMN and iron-sulfur (Fe-S) centers, to quinones in the respiratory chain. The immediate electron acceptor for the enzyme in this species is believed to be ubiquinone. Couples the redox reaction to proton translocation (for every two electrons transferred, four hydrogen ions are translocated across the cytoplasmic membrane), and thus conserves the redox energy in a proton gradient. The protein is NADH-quinone oxidoreductase subunit I 2 of Nitrosospira multiformis (strain ATCC 25196 / NCIMB 11849 / C 71).